The primary structure comprises 103 residues: Co-chaperonin GroES (103 aa).

Belongs to the GroES chaperonin family. In terms of assembly, heptamer of 7 subunits arranged in a ring. Interacts with the chaperonin GroEL.

The protein localises to the cytoplasm. Together with the chaperonin GroEL, plays an essential role in assisting protein folding. The GroEL-GroES system forms a nano-cage that allows encapsulation of the non-native substrate proteins and provides a physical environment optimized to promote and accelerate protein folding. GroES binds to the apical surface of the GroEL ring, thereby capping the opening of the GroEL channel. This Prochlorococcus marinus subsp. pastoris (strain CCMP1986 / NIES-2087 / MED4) protein is Co-chaperonin GroES.